Here is a 396-residue protein sequence, read N- to C-terminus: S-adenosylmethionine synthase (396 aa).

His-14 is an ATP binding site. Asp-16 provides a ligand contact to Mg(2+). Position 42 (Glu-42) interacts with K(+). L-methionine-binding residues include Glu-55 and Gln-98. The flexible loop stretch occupies residues 98-108 (QSPDIALGVNK). ATP contacts are provided by residues 174 to 176 (DGK), 241 to 242 (RF), Asp-250, 256 to 257 (RK), Ala-273, and Lys-277. L-methionine is bound at residue Asp-250. Lys-281 is an L-methionine binding site.

The protein belongs to the AdoMet synthase family. Homotetramer; dimer of dimers. It depends on Mg(2+) as a cofactor. K(+) is required as a cofactor.

It localises to the cytoplasm. The enzyme catalyses L-methionine + ATP + H2O = S-adenosyl-L-methionine + phosphate + diphosphate. It participates in amino-acid biosynthesis; S-adenosyl-L-methionine biosynthesis; S-adenosyl-L-methionine from L-methionine: step 1/1. Catalyzes the formation of S-adenosylmethionine (AdoMet) from methionine and ATP. The overall synthetic reaction is composed of two sequential steps, AdoMet formation and the subsequent tripolyphosphate hydrolysis which occurs prior to release of AdoMet from the enzyme. The polypeptide is S-adenosylmethionine synthase (Pseudothermotoga lettingae (strain ATCC BAA-301 / DSM 14385 / NBRC 107922 / TMO) (Thermotoga lettingae)).